Consider the following 118-residue polypeptide: Probable non-functional immunoglobulin lambda variable 1-50 (118 aa).

A signal peptide spans 1-19; the sequence is MAWSSLLLTLLAHCTGSWA. The tract at residues 20–44 is framework-1; sequence QSVLTQPPSVSGAPGQRVTISCTGS. The 99-residue stretch at 20-118 folds into the Ig-like domain; that stretch reads QSVLTQPPSV…CKAWDNSLNA (99 aa). Cysteine 41 and cysteine 109 are disulfide-bonded. Residues 45–53 are complementarity-determining-1; the sequence is SSNIGAGYV. The segment at 54–70 is framework-2; it reads VHWYQQLPGTAPKLLIY. Residues 71-73 are complementarity-determining-2; sequence GNS. Residues 74 to 109 are framework-3; it reads NRPSGVPDQFSGSKSGTSASLAITGLQSEDEADYYC. The interval 110–118 is complementarity-determining-3; sequence KAWDNSLNA.

As to quaternary structure, immunoglobulins are composed of two identical heavy chains and two identical light chains; disulfide-linked.

Its subcellular location is the secreted. It is found in the cell membrane. Probable non-functional open reading frame (ORF) of V region of the variable domain of immunoglobulin light chains. Non-functional ORF generally cannot participate in the synthesis of a productive immunoglobulin chain due to altered V-(D)-J or switch recombination and/or splicing site (at mRNA level) and/or conserved amino acid change (protein level). Immunoglobulins, also known as antibodies, are membrane-bound or secreted glycoproteins produced by B lymphocytes. In the recognition phase of humoral immunity, the membrane-bound immunoglobulins serve as receptors which, upon binding of a specific antigen, trigger the clonal expansion and differentiation of B lymphocytes into immunoglobulins-secreting plasma cells. Secreted immunoglobulins mediate the effector phase of humoral immunity, which results in the elimination of bound antigens. The antigen binding site is formed by the variable domain of one heavy chain, together with that of its associated light chain. Thus, each immunoglobulin has two antigen binding sites with remarkable affinity for a particular antigen. The variable domains are assembled by a process called V-(D)-J rearrangement and can then be subjected to somatic hypermutations which, after exposure to antigen and selection, allow affinity maturation for a particular antigen. In Homo sapiens (Human), this protein is Probable non-functional immunoglobulin lambda variable 1-50.